The chain runs to 230 residues: MKYKGTGSLILTALIGGIPSSTAVTMAFSNLSRKFSYLSELFFFSIILSWLVMFFRVIFYTFIIFEGMIYKLVLLLLPYFALLLMFAIFLYLKGNKNHEEGGSMSIKNPFSLSQAFTFGLIYSTISVISHYLKTHFGDEGIYVLSFLSGIMDIDAITLLLARLSDKGEIGVDVAAMGILLAVMSNNLFKSGYAIIFGSKKLKIYFLFVALFTLIYTTTLLILFDKLHMSS.

Transmembrane regions (helical) follow at residues S8–F28, S45–F65, L72–L92, P109–S129, I141–A161, M176–F196, and I203–F223.

This sequence to P.aeruginosa PA0043 and M.thermoautotrophicum MTH1451.

The protein resides in the cell membrane. This is an uncharacterized protein from Aquifex aeolicus (strain VF5).